The primary structure comprises 263 residues: H-2 class II histocompatibility antigen, A-U beta chain (263 aa).

The N-terminal stretch at 1 to 27 (MALQIPSLLLLAAVVVLMVLSSPGTEG) is a signal peptide. The segment at 28–120 (GDSERHFVVQ…TEVPTSLRRL (93 aa)) is beta-1. Residues 28 to 224 (GDSERHFVVQ…RAQSESARSK (197 aa)) are Extracellular-facing. Cystine bridges form between Cys-42–Cys-104 and Cys-143–Cys-199. N-linked (GlcNAc...) asparagine glycosylation occurs at Asn-46. The beta-2 stretch occupies residues 121–214 (EQPNVVISLS…SLKSPITVEW (94 aa)). The Ig-like C1-type domain maps to 123–211 (PNVVISLSRT…EHPSLKSPIT (89 aa)). Positions 215–224 (RAQSESARSK) are connecting peptide. A helical membrane pass occupies residues 225 to 245 (MLSGIGGCVLGVIFLGLGLFI). Topologically, residues 246 to 263 (RHRSQKGPRGPPPAGLLQ) are cytoplasmic.

Belongs to the MHC class II family.

The protein resides in the membrane. The polypeptide is H-2 class II histocompatibility antigen, A-U beta chain (Mus musculus (Mouse)).